The sequence spans 315 residues: Lipoyl synthase (315 aa).

[4Fe-4S] cluster contacts are provided by cysteine 62, cysteine 67, cysteine 73, cysteine 88, cysteine 92, cysteine 95, and serine 302. In terms of domain architecture, Radical SAM core spans 73–291 (CFGHGTATFM…GELAKKLGFS (219 aa)).

Belongs to the radical SAM superfamily. Lipoyl synthase family. It depends on [4Fe-4S] cluster as a cofactor.

Its subcellular location is the cytoplasm. It carries out the reaction [[Fe-S] cluster scaffold protein carrying a second [4Fe-4S](2+) cluster] + N(6)-octanoyl-L-lysyl-[protein] + 2 oxidized [2Fe-2S]-[ferredoxin] + 2 S-adenosyl-L-methionine + 4 H(+) = [[Fe-S] cluster scaffold protein] + N(6)-[(R)-dihydrolipoyl]-L-lysyl-[protein] + 4 Fe(3+) + 2 hydrogen sulfide + 2 5'-deoxyadenosine + 2 L-methionine + 2 reduced [2Fe-2S]-[ferredoxin]. Its pathway is protein modification; protein lipoylation via endogenous pathway; protein N(6)-(lipoyl)lysine from octanoyl-[acyl-carrier-protein]: step 2/2. In terms of biological role, catalyzes the radical-mediated insertion of two sulfur atoms into the C-6 and C-8 positions of the octanoyl moiety bound to the lipoyl domains of lipoate-dependent enzymes, thereby converting the octanoylated domains into lipoylated derivatives. The protein is Lipoyl synthase of Coxiella burnetii (strain Dugway 5J108-111).